The following is a 147-amino-acid chain: Large ribosomal subunit protein uL22 (147 aa).

The disordered stretch occupies residues 110-147 (EEKKTVAKKAPAAKKTTTTKAPAKKTTSTKKATAKKES). Low complexity predominate over residues 117–140 (KKAPAAKKTTTTKAPAKKTTSTKK).

This sequence belongs to the universal ribosomal protein uL22 family. As to quaternary structure, part of the 50S ribosomal subunit.

Its function is as follows. This protein binds specifically to 23S rRNA; its binding is stimulated by other ribosomal proteins, e.g. L4, L17, and L20. It is important during the early stages of 50S assembly. It makes multiple contacts with different domains of the 23S rRNA in the assembled 50S subunit and ribosome. Functionally, the globular domain of the protein is located near the polypeptide exit tunnel on the outside of the subunit, while an extended beta-hairpin is found that lines the wall of the exit tunnel in the center of the 70S ribosome. This chain is Large ribosomal subunit protein uL22, found in Campylobacter jejuni subsp. jejuni serotype O:23/36 (strain 81-176).